The following is a 134-amino-acid chain: Putative protein KRIP1 (134 aa).

The interval Met1–Leu134 is disordered. Polar residues-rich tracts occupy residues Thr9 to Phe24, Ser43 to Ser55, and Cys64 to Asn79. Residues Pro119 to Ala128 are compositionally biased toward pro residues.

Abundant expression is found in prostate, restricted to cells of epithelial origin in normal and diseased glands. Very low expression is detected in pancreas and ovary.

It is found in the cytoplasm. The protein resides in the nucleus. This is Putative protein KRIP1 (KLKP1) from Homo sapiens (Human).